The primary structure comprises 715 residues: Fatty acid oxidation complex subunit alpha (715 aa).

The enoyl-CoA hydratase stretch occupies residues 1–190 (MDMTSAFTLN…RVGLVDEVVP (190 aa)). Residues 306 to 715 (GPLASVGVLG…WNSGETDLKE (410 aa)) form a 3-hydroxyacyl-CoA dehydrogenase region.

The protein in the N-terminal section; belongs to the enoyl-CoA hydratase/isomerase family. In the central section; belongs to the 3-hydroxyacyl-CoA dehydrogenase family. In terms of assembly, heterotetramer of two alpha chains (FadJ) and two beta chains (FadI).

Its subcellular location is the cytoplasm. The enzyme catalyses a (3S)-3-hydroxyacyl-CoA = a (2E)-enoyl-CoA + H2O. The catalysed reaction is a 4-saturated-(3S)-3-hydroxyacyl-CoA = a (3E)-enoyl-CoA + H2O. It carries out the reaction a (3S)-3-hydroxyacyl-CoA + NAD(+) = a 3-oxoacyl-CoA + NADH + H(+). It catalyses the reaction (3S)-3-hydroxybutanoyl-CoA = (3R)-3-hydroxybutanoyl-CoA. It participates in lipid metabolism; fatty acid beta-oxidation. Its function is as follows. Catalyzes the formation of a hydroxyacyl-CoA by addition of water on enoyl-CoA. Also exhibits 3-hydroxyacyl-CoA epimerase and 3-hydroxyacyl-CoA dehydrogenase activities. The sequence is that of Fatty acid oxidation complex subunit alpha from Citrobacter koseri (strain ATCC BAA-895 / CDC 4225-83 / SGSC4696).